A 197-amino-acid polypeptide reads, in one-letter code: ATP synthase protein MI25 (197 aa).

Residues 30-50 form a helical membrane-spanning segment; sequence ISIYNEEMIVARCFIGFLIFS.

Belongs to the ATPase protein MI25 family. F-type ATPases have 2 components, CF(1) - the catalytic core - and CF(0) - the membrane proton channel. CF(1) has five subunits: alpha(3), beta(3), gamma(1), delta(1), epsilon(1). CF(0) has three main subunits: a, b and c.

It localises to the mitochondrion membrane. In terms of biological role, this is one of the chains of the nonenzymatic component (CF(0) subunit) of the mitochondrial ATPase complex. The chain is ATP synthase protein MI25 from Oryza sativa subsp. indica (Rice).